Consider the following 473-residue polypeptide: Chromosomal replication initiator protein DnaA (473 aa).

The interval 1 to 87 (MADGEESISV…LAVTTFAIVV (87 aa)) is domain I, interacts with DnaA modulators. The tract at residues 87-132 (VNPEIQQESLSTVGEPEPTPAPYLDVATFTVAPPAEITAPPRNGDT) is domain II. The segment at 133–349 (RLNSKYSFDN…GTLIRVTAFA (217 aa)) is domain III, AAA+ region. Residues Gly-177, Gly-179, Lys-180, and Thr-181 each contribute to the ATP site. The domain IV, binds dsDNA stretch occupies residues 350-473 (SLNRTPVDMP…LTSRIKQNHR (124 aa)).

It belongs to the DnaA family. As to quaternary structure, oligomerizes as a right-handed, spiral filament on DNA at oriC.

The protein localises to the cytoplasm. In terms of biological role, plays an essential role in the initiation and regulation of chromosomal replication. ATP-DnaA binds to the origin of replication (oriC) to initiate formation of the DNA replication initiation complex once per cell cycle. Binds the DnaA box (a 9 base pair repeat at the origin) and separates the double-stranded (ds)DNA. Forms a right-handed helical filament on oriC DNA; dsDNA binds to the exterior of the filament while single-stranded (ss)DNA is stabiized in the filament's interior. The ATP-DnaA-oriC complex binds and stabilizes one strand of the AT-rich DNA unwinding element (DUE), permitting loading of DNA polymerase. After initiation quickly degrades to an ADP-DnaA complex that is not apt for DNA replication. Binds acidic phospholipids. The sequence is that of Chromosomal replication initiator protein DnaA from Leifsonia xyli subsp. xyli (strain CTCB07).